Here is a 371-residue protein sequence, read N- to C-terminus: Collectin-46 (371 aa).

A signal peptide spans M1–G20. The interval P43–L215 is disordered. Residues G46 to A216 form the Collagen-like domain. Basic and acidic residues predominate over residues D51–D65. N-linked (GlcNAc...) asparagine glycosylation is present at N90. Residues P113 to P128 are compositionally biased toward low complexity. The span at G139–G148 shows a compositional bias: gly residues. Positions A170–A191 are enriched in low complexity. The segment covering K198–K210 has biased composition (basic and acidic residues). The short motif at R201–D203 is the Cell attachment site element. The region spanning Q273 to F371 is the C-type lectin domain. 2 disulfide bridges follow: C275–C369 and C347–C361.

This sequence belongs to the SFTPD family. As to quaternary structure, oligomeric complex of 4 set of homotrimers. In terms of processing, hydroxylated. In terms of tissue distribution, highly expressed in thymus and liver.

It is found in the secreted. The sequence is that of Collectin-46 (CL46) from Bos taurus (Bovine).